We begin with the raw amino-acid sequence, 876 residues long: Alanine--tRNA ligase (876 aa).

At lysine 74 the chain carries N6-acetyllysine. Zn(2+)-binding residues include histidine 564, histidine 568, cysteine 666, and histidine 670.

The protein belongs to the class-II aminoacyl-tRNA synthetase family. Homotetramer. The cofactor is Zn(2+).

The protein resides in the cytoplasm. It catalyses the reaction tRNA(Ala) + L-alanine + ATP = L-alanyl-tRNA(Ala) + AMP + diphosphate. Its function is as follows. Catalyzes the attachment of alanine to tRNA(Ala) in a two-step reaction: alanine is first activated by ATP to form Ala-AMP and then transferred to the acceptor end of tRNA(Ala). Also edits incorrectly charged Ser-tRNA(Ala) and Gly-tRNA(Ala) via its editing domain. The polypeptide is Alanine--tRNA ligase (Shigella dysenteriae serotype 1 (strain Sd197)).